The chain runs to 208 residues: Outer-membrane lipoprotein carrier protein (208 aa).

The N-terminal stretch at 1–23 (MKKTVKNLTALLTLALAAPWALA) is a signal peptide.

This sequence belongs to the LolA family. In terms of assembly, monomer.

It is found in the periplasm. Functionally, participates in the translocation of lipoproteins from the inner membrane to the outer membrane. Only forms a complex with a lipoprotein if the residue after the N-terminal Cys is not an aspartate (The Asp acts as a targeting signal to indicate that the lipoprotein should stay in the inner membrane). The chain is Outer-membrane lipoprotein carrier protein from Actinobacillus succinogenes (strain ATCC 55618 / DSM 22257 / CCUG 43843 / 130Z).